The primary structure comprises 318 residues: Aspartate carbamoyltransferase catalytic subunit (318 aa).

Carbamoyl phosphate contacts are provided by R67 and T68. K95 lines the L-aspartate pocket. 3 residues coordinate carbamoyl phosphate: R117, H145, and Q148. Residues R178 and R236 each contribute to the L-aspartate site. Residues G277 and P278 each contribute to the carbamoyl phosphate site.

The protein belongs to the aspartate/ornithine carbamoyltransferase superfamily. ATCase family. In terms of assembly, heterododecamer (2C3:3R2) of six catalytic PyrB chains organized as two trimers (C3), and six regulatory PyrI chains organized as three dimers (R2).

It catalyses the reaction carbamoyl phosphate + L-aspartate = N-carbamoyl-L-aspartate + phosphate + H(+). It functions in the pathway pyrimidine metabolism; UMP biosynthesis via de novo pathway; (S)-dihydroorotate from bicarbonate: step 2/3. Its function is as follows. Catalyzes the condensation of carbamoyl phosphate and aspartate to form carbamoyl aspartate and inorganic phosphate, the committed step in the de novo pyrimidine nucleotide biosynthesis pathway. The protein is Aspartate carbamoyltransferase catalytic subunit of Roseiflexus castenholzii (strain DSM 13941 / HLO8).